The primary structure comprises 1412 residues: DNA-directed RNA polymerase subunit beta' (1412 aa).

Zn(2+)-binding residues include Cys70, Cys72, Cys85, and Cys88. Mg(2+) contacts are provided by Asp460, Asp462, and Asp464. Zn(2+)-binding residues include Cys814, Cys888, Cys895, and Cys898. The interval 1378-1412 (EREAARQLANPFEDAPVTVDADAPQSDAGQEGSAE) is disordered.

It belongs to the RNA polymerase beta' chain family. The RNAP catalytic core consists of 2 alpha, 1 beta, 1 beta' and 1 omega subunit. When a sigma factor is associated with the core the holoenzyme is formed, which can initiate transcription. It depends on Mg(2+) as a cofactor. The cofactor is Zn(2+).

The enzyme catalyses RNA(n) + a ribonucleoside 5'-triphosphate = RNA(n+1) + diphosphate. In terms of biological role, DNA-dependent RNA polymerase catalyzes the transcription of DNA into RNA using the four ribonucleoside triphosphates as substrates. This chain is DNA-directed RNA polymerase subunit beta', found in Bordetella petrii (strain ATCC BAA-461 / DSM 12804 / CCUG 43448).